Reading from the N-terminus, the 250-residue chain is Small ribosomal subunit protein uS3 (250 aa).

Positions 39–111 (IRQLINNFSK…DINLNILEVK (73 aa)) constitute a KH type-2 domain.

This sequence belongs to the universal ribosomal protein uS3 family. In terms of assembly, part of the 30S ribosomal subunit. Forms a tight complex with proteins S10 and S14.

Functionally, binds the lower part of the 30S subunit head. Binds mRNA in the 70S ribosome, positioning it for translation. This is Small ribosomal subunit protein uS3 from Phytoplasma australiense.